The sequence spans 161 residues: MKTVIYPGTFDPITNGHLDIIERTAVLFPQVIVAVAASPTKKPLFDLQDRVQLAEESVAHLPNVRVIGFSGLLADAVKEHDITAIIRGMRTTMDFEYELQLAHLNRVLSQGVESLFLPSTEQWSYVSSTIVREIYLHNGNVDQFVPPPVLNALNRRRKADA.

A substrate-binding site is contributed by Thr-9. Residues 9–10 (TF) and His-17 each bind ATP. Substrate-binding residues include Lys-41, Leu-73, and Arg-87. ATP is bound by residues 88–90 (GMR), Glu-98, and 123–129 (WSYVSST).

It belongs to the bacterial CoaD family. In terms of assembly, homohexamer. The cofactor is Mg(2+).

The protein resides in the cytoplasm. The enzyme catalyses (R)-4'-phosphopantetheine + ATP + H(+) = 3'-dephospho-CoA + diphosphate. Its pathway is cofactor biosynthesis; coenzyme A biosynthesis; CoA from (R)-pantothenate: step 4/5. Functionally, reversibly transfers an adenylyl group from ATP to 4'-phosphopantetheine, yielding dephospho-CoA (dPCoA) and pyrophosphate. The sequence is that of Phosphopantetheine adenylyltransferase from Actinobacillus succinogenes (strain ATCC 55618 / DSM 22257 / CCUG 43843 / 130Z).